We begin with the raw amino-acid sequence, 192 residues long: Orotate phosphoribosyltransferase (192 aa).

116–124 (EDIVTTGLS) contributes to the 5-phospho-alpha-D-ribose 1-diphosphate binding site. Positions 120 and 148 each coordinate orotate.

It belongs to the purine/pyrimidine phosphoribosyltransferase family. PyrE subfamily. Homodimer. Mg(2+) is required as a cofactor.

It carries out the reaction orotidine 5'-phosphate + diphosphate = orotate + 5-phospho-alpha-D-ribose 1-diphosphate. Its pathway is pyrimidine metabolism; UMP biosynthesis via de novo pathway; UMP from orotate: step 1/2. Functionally, catalyzes the transfer of a ribosyl phosphate group from 5-phosphoribose 1-diphosphate to orotate, leading to the formation of orotidine monophosphate (OMP). The sequence is that of Orotate phosphoribosyltransferase from Bartonella henselae (strain ATCC 49882 / DSM 28221 / CCUG 30454 / Houston 1) (Rochalimaea henselae).